Consider the following 376-residue polypeptide: Thymidine kinase (376 aa).

The tract at residues 1–39 (MASYPCHQHASAFDQAARSRGHSNRRTALRPRRQQEATE) is disordered. Positions 19–32 (SRGHSNRRTALRPR) are enriched in basic residues. Position 56-63 (56-63 (GPHGMGKT)) interacts with ATP. The active-site Proton acceptor is E83. Positions 101 and 125 each coordinate substrate. R216 is a binding site for ATP. R222 lines the substrate pocket. The interval 260–280 (GQLSGTAVPPQGAEPQSNAGP) is disordered.

It belongs to the herpesviridae thymidine kinase family. As to quaternary structure, homodimer.

It catalyses the reaction thymidine + ATP = dTMP + ADP + H(+). Its function is as follows. Catalyzes the transfer of the gamma-phospho group of ATP to thymidine to generate dTMP in the salvage pathway of pyrimidine synthesis. The dTMP serves as a substrate for DNA polymerase during viral DNA replication. Allows the virus to be reactivated and to grow in non-proliferative cells lacking a high concentration of phosphorylated nucleic acid precursors. This Human herpesvirus 1 (strain KOS) (HHV-1) protein is Thymidine kinase.